Consider the following 217-residue polypeptide: 3,4-dihydroxy-2-butanone 4-phosphate synthase (217 aa).

D-ribulose 5-phosphate contacts are provided by residues 37–38, Asp42, 150–154, and Glu174; these read RE and RGGHT. Mg(2+) is bound at residue Glu38. His153 contributes to the Mg(2+) binding site.

Belongs to the DHBP synthase family. Homodimer. Requires Mg(2+) as cofactor. The cofactor is Mn(2+).

It catalyses the reaction D-ribulose 5-phosphate = (2S)-2-hydroxy-3-oxobutyl phosphate + formate + H(+). The protein operates within cofactor biosynthesis; riboflavin biosynthesis; 2-hydroxy-3-oxobutyl phosphate from D-ribulose 5-phosphate: step 1/1. Functionally, catalyzes the conversion of D-ribulose 5-phosphate to formate and 3,4-dihydroxy-2-butanone 4-phosphate. The sequence is that of 3,4-dihydroxy-2-butanone 4-phosphate synthase from Pectobacterium carotovorum subsp. carotovorum (strain PC1).